The following is a 190-amino-acid chain: Mediator of RNA polymerase II transcription subunit 28 (190 aa).

Residues Met76–Ala108 adopt a coiled-coil conformation.

This sequence belongs to the Mediator complex subunit 28 family. Component of the Mediator complex.

The protein localises to the nucleus. Functionally, component of the Mediator complex, a coactivator involved in the regulated transcription of nearly all RNA polymerase II-dependent genes. Mediator functions as a bridge to convey information from gene-specific regulatory proteins to the basal RNA polymerase II transcription machinery. Mediator is recruited to promoters by direct interactions with regulatory proteins and serves as a scaffold for the assembly of a functional preinitiation complex with RNA polymerase II and the general transcription factors. The sequence is that of Mediator of RNA polymerase II transcription subunit 28 (MED28) from Drosophila pseudoobscura pseudoobscura (Fruit fly).